The chain runs to 639 residues: Chaperone protein DnaK (639 aa).

Phosphothreonine; by autocatalysis is present on threonine 198. The segment at 602–639 (QAKSQAQGGDNADAGKQANATADDVVDAEFEEVKDDKK) is disordered. Acidic residues predominate over residues 625–639 (DVVDAEFEEVKDDKK).

The protein belongs to the heat shock protein 70 family.

Its function is as follows. Acts as a chaperone. The polypeptide is Chaperone protein DnaK (Shewanella baltica (strain OS155 / ATCC BAA-1091)).